Consider the following 330-residue polypeptide: GTPase Obg (330 aa).

One can recognise an Obg domain in the interval 1-159; sequence MHFIDEVKIY…MWIHLSLKLL (159 aa). The OBG-type G domain maps to 160 to 327; sequence SDVGLVGLPN…IVKLALETIK (168 aa). GTP-binding positions include 166 to 173, 191 to 195, 212 to 215, 279 to 282, and 308 to 310; these read GLPNAGKS, FTTLV, DIPG, NKCD, and STC. Mg(2+) is bound by residues Ser173 and Thr193.

This sequence belongs to the TRAFAC class OBG-HflX-like GTPase superfamily. OBG GTPase family. Monomer. Mg(2+) serves as cofactor.

It is found in the cytoplasm. An essential GTPase which binds GTP, GDP and possibly (p)ppGpp with moderate affinity, with high nucleotide exchange rates and a fairly low GTP hydrolysis rate. Plays a role in control of the cell cycle, stress response, ribosome biogenesis and in those bacteria that undergo differentiation, in morphogenesis control. The sequence is that of GTPase Obg from Rickettsia conorii (strain ATCC VR-613 / Malish 7).